Consider the following 101-residue polypeptide: Small ribosomal subunit protein uS10 (101 aa).

The protein belongs to the universal ribosomal protein uS10 family. In terms of assembly, part of the 30S ribosomal subunit.

Functionally, involved in the binding of tRNA to the ribosomes. This is Small ribosomal subunit protein uS10 from Rhodococcus erythropolis (strain PR4 / NBRC 100887).